We begin with the raw amino-acid sequence, 168 residues long: NADH dehydrogenase [ubiquinone] 1 alpha subcomplex assembly factor 2 (168 aa).

The segment at 112–168 is disordered; sequence GKETSEELLPSPTATQVKGHASAPYFGREEPSVAPTSTGKTFQPGSWTPEDGKRQSQ. Ser-133 carries the phosphoserine modification. Residues 145–157 show a composition bias toward polar residues; sequence APTSTGKTFQPGS.

This sequence belongs to the complex I NDUFA12 subunit family. In terms of assembly, interacts with ARMC9.

It localises to the mitochondrion. Functionally, acts as a molecular chaperone for mitochondrial complex I assembly. Complex I functions in the transfer of electrons from NADH to the respiratory chain. The immediate electron acceptor for the enzyme is believed to be ubiquinone. Is involved in the initial steps of cilia formation, including removal of CP110 from the mother centrioles, docking of membrane vesicles to the mother centrioles, and establishment of the transition zone. The sequence is that of NADH dehydrogenase [ubiquinone] 1 alpha subcomplex assembly factor 2 (Ndufaf2) from Mus musculus (Mouse).